The chain runs to 492 residues: Katanin p60 ATPase-containing subunit A1 (492 aa).

A disordered region spans residues 91–158 (PAHDGEVWSL…MKPVRAREKK (68 aa)). Over residues 138-147 (LPSSKNTNNV) the composition is skewed to polar residues. 250 to 257 (GPPGTGKT) contributes to the ATP binding site.

This sequence belongs to the AAA ATPase family. Katanin p60 subunit A1 subfamily. In terms of assembly, can homooligomerize into hexameric rings, which may be promoted by interaction with microtubules. Interacts with katnb1, which may serve as a targeting subunit.

It localises to the cytoplasm. Its subcellular location is the cytoskeleton. It is found in the microtubule organizing center. The protein resides in the centrosome. The protein localises to the spindle pole. It localises to the spindle. It carries out the reaction n ATP + n H2O + a microtubule = n ADP + n phosphate + (n+1) alpha/beta tubulin heterodimers.. With respect to regulation, ATPase activity is stimulated by microtubules, which promote homooligomerization. ATP-dependent microtubule severing is stimulated by interaction with katnb1. In terms of biological role, catalytic subunit of a complex which severs microtubules in an ATP-dependent manner. Microtubule severing may promote rapid reorganization of cellular microtubule arrays and the release of microtubules from the centrosome following nucleation. The sequence is that of Katanin p60 ATPase-containing subunit A1 (katna1) from Xenopus tropicalis (Western clawed frog).